Here is a 394-residue protein sequence, read N- to C-terminus: Nicotinate phosphoribosyltransferase (394 aa).

H218 carries the post-translational modification Phosphohistidine; by autocatalysis.

This sequence belongs to the NAPRTase family. In terms of processing, transiently phosphorylated on a His residue during the reaction cycle. Phosphorylation strongly increases the affinity for substrates and increases the rate of nicotinate D-ribonucleotide production. Dephosphorylation regenerates the low-affinity form of the enzyme, leading to product release.

It carries out the reaction nicotinate + 5-phospho-alpha-D-ribose 1-diphosphate + ATP + H2O = nicotinate beta-D-ribonucleotide + ADP + phosphate + diphosphate. The protein operates within cofactor biosynthesis; NAD(+) biosynthesis; nicotinate D-ribonucleotide from nicotinate: step 1/1. Its function is as follows. Catalyzes the synthesis of beta-nicotinate D-ribonucleotide from nicotinate and 5-phospho-D-ribose 1-phosphate at the expense of ATP. The polypeptide is Nicotinate phosphoribosyltransferase (Xylella fastidiosa (strain Temecula1 / ATCC 700964)).